A 290-amino-acid chain; its full sequence is Nucleotide-binding protein BPP4038 (290 aa).

Residue 9–16 (GISGSGKS) coordinates ATP. 58–61 (DVRS) is a GTP binding site.

The protein belongs to the RapZ-like family.

In terms of biological role, displays ATPase and GTPase activities. This is Nucleotide-binding protein BPP4038 from Bordetella parapertussis (strain 12822 / ATCC BAA-587 / NCTC 13253).